The chain runs to 226 residues: Insulin-like growth factor-binding protein 6 (226 aa).

The signal sequence occupies residues M1–S25. One can recognise an IGFBP N-terminal domain in the interval A26 to A99. Cystine bridges form between C30/C33, C49/C55, C63/C76, and C70/C96. Positions G92 to C148 are disordered. Residues G101–K126 are compositionally biased toward basic and acidic residues. The Thyroglobulin type-1 domain occupies M145–C220. Cystine bridges form between C148–C176, C187–C198, and C200–C220. Residues G205 to G226 are disordered. A compositionally biased stretch (polar residues) spans G214–G226.

In terms of assembly, interacts (via C-terminal domain) with PHB2. In terms of processing, O-glycosylated.

The protein resides in the secreted. In terms of biological role, IGF-binding proteins prolong the half-life of the IGFs and have been shown to either inhibit or stimulate the growth promoting effects of the IGFs on cell culture. They alter the interaction of IGFs with their cell surface receptors. Activates the MAPK signaling pathway and induces cell migration. This is Insulin-like growth factor-binding protein 6 (Igfbp6) from Rattus norvegicus (Rat).